The following is a 418-amino-acid chain: Creatine kinase U-type, mitochondrial (418 aa).

The transit peptide at 1 to 39 directs the protein to the mitochondrion; the sequence is MAGPFSRLLSARPGLRLLALAGAGSLTAGILLRPESVGA. Residues 40–64 are cardiolipin-binding; that stretch reads AAAERRRLYPPSAEYPDLRKHNNCM. One can recognise a Phosphagen kinase N-terminal domain in the interval 46-132; it reads RLYPPSAEYP…FDPVIQERHN (87 aa). Serine 152 is subject to Phosphoserine. The 243-residue stretch at 159–401 folds into the Phosphagen kinase C-terminal domain; it reads YVLSSRVRTG…NYLIDCERRL (243 aa). 162 to 166 contributes to the ATP binding site; sequence SSRVR. Serine 197 carries the post-translational modification Phosphoserine. Position 214 is a phosphothreonine (threonine 214). Histidine 225 is an ATP binding site. The residue at position 233 (serine 233) is a Phosphoserine. Residues arginine 270, arginine 326, and 354–359 each bind ATP; that span reads RGTGGV. A Phosphothreonine modification is found at threonine 356. Serine 366 carries the post-translational modification Phosphoserine. Aspartate 369 serves as a coordination point for ATP.

This sequence belongs to the ATP:guanido phosphotransferase family. As to quaternary structure, exists as an octamer composed of four MTCK homodimers.

The protein localises to the mitochondrion inner membrane. It catalyses the reaction creatine + ATP = N-phosphocreatine + ADP + H(+). In terms of biological role, reversibly catalyzes the transfer of phosphate between ATP and various phosphogens (e.g. creatine phosphate). Creatine kinase isoenzymes play a central role in energy transduction in tissues with large, fluctuating energy demands, such as skeletal muscle, heart, brain and spermatozoa. The chain is Creatine kinase U-type, mitochondrial (Ckmt1) from Mus musculus (Mouse).